Here is a 508-residue protein sequence, read N- to C-terminus: Serine carboxypeptidase 3 (508 aa).

Residues 1–19 (MVTTPRLVSLLLLLALCAA) form the signal peptide. The propeptide occupies 20-80 (AAGALRLPPD…PGQLLERRVT (61 aa)). Residues 48–67 (PKDSSSSSGRHGARVGEGNE) form a disordered region. Leu81 is modified (blocked amino end (Leu)). 3 disulfide bridges follow: Cys133-Cys373, Cys301-Cys316, and Cys339-Cys344. The N-linked (GlcNAc...) asparagine glycan is linked to Asn151. Ser223 is an active-site residue. Residue Asp411 is part of the active site. Cys414 provides a ligand contact to substrate. Residue His468 is part of the active site. Residues 492–508 (EAVPEEESSTTSFYAAM) constitute a propeptide that is removed on maturation.

Belongs to the peptidase S10 family. In terms of assembly, monomer.

It localises to the secreted. It catalyses the reaction Release of a C-terminal amino acid with broad specificity.. Its activity is regulated as follows. Inhibited by mercuric ions. This Hordeum vulgare (Barley) protein is Serine carboxypeptidase 3 (CBP3).